The chain runs to 306 residues: 3-methyl-2-oxobutanoate hydroxymethyltransferase (306 aa).

Mg(2+)-binding residues include D53 and D96. 3-methyl-2-oxobutanoate-binding positions include 53-54 (DS), D96, and K126. Residue E128 participates in Mg(2+) binding. E195 serves as the catalytic Proton acceptor.

Belongs to the PanB family. As to quaternary structure, homodecamer; pentamer of dimers. The cofactor is Mg(2+).

Its subcellular location is the cytoplasm. The enzyme catalyses 3-methyl-2-oxobutanoate + (6R)-5,10-methylene-5,6,7,8-tetrahydrofolate + H2O = 2-dehydropantoate + (6S)-5,6,7,8-tetrahydrofolate. The protein operates within cofactor biosynthesis; (R)-pantothenate biosynthesis; (R)-pantoate from 3-methyl-2-oxobutanoate: step 1/2. In terms of biological role, catalyzes the reversible reaction in which hydroxymethyl group from 5,10-methylenetetrahydrofolate is transferred onto alpha-ketoisovalerate to form ketopantoate. The chain is 3-methyl-2-oxobutanoate hydroxymethyltransferase from Anaeromyxobacter dehalogenans (strain 2CP-1 / ATCC BAA-258).